A 152-amino-acid chain; its full sequence is Endoribonuclease YbeY (152 aa).

His114, His118, and His124 together coordinate Zn(2+).

The protein belongs to the endoribonuclease YbeY family. It depends on Zn(2+) as a cofactor.

The protein localises to the cytoplasm. In terms of biological role, single strand-specific metallo-endoribonuclease involved in late-stage 70S ribosome quality control and in maturation of the 3' terminus of the 16S rRNA. In Coxiella burnetii (strain CbuK_Q154) (Coxiella burnetii (strain Q154)), this protein is Endoribonuclease YbeY.